Reading from the N-terminus, the 512-residue chain is Maturase K (512 aa).

Belongs to the intron maturase 2 family. MatK subfamily.

It localises to the plastid. The protein resides in the chloroplast. Usually encoded in the trnK tRNA gene intron. Probably assists in splicing its own and other chloroplast group II introns. The polypeptide is Maturase K (Amorphophallus titanum (Titan arum)).